The sequence spans 421 residues: Hemagglutinin-esterase (421 aa).

A signal peptide spans Met-1–Ser-16. The tract at residues Phe-7–Gly-127 is esterase domain 1. The Virion surface portion of the chain corresponds to Leu-17–Leu-392. Ser-40 functions as the Nucleophile in the catalytic mechanism. Cys-44 and Cys-65 are joined by a disulfide. N-linked (GlcNAc...) asparagine; by host glycosylation is found at Asn-54, Asn-89, Asn-153, Asn-236, and Asn-301. 3 cysteine pairs are disulfide-bonded: Cys-113-Cys-162, Cys-197-Cys-276, and Cys-205-Cys-249. A receptor binding region spans residues Leu-128–Leu-266. The segment at Leu-267–Thr-379 is esterase domain 2. Cys-307 and Cys-312 are disulfide-bonded. An N-linked (GlcNAc...) asparagine; by host glycan is attached at Asn-316. Residues Asp-326 and His-329 each act as charge relay system in the active site. A disulfide bridge links Cys-347 with Cys-371. An N-linked (GlcNAc...) asparagine; by host glycan is attached at Asn-358. The chain crosses the membrane as a helical span at residues Ile-393–Phe-413. Over Met-414–Leu-421 the chain is Intravirion. Asn-417 carries an N-linked (GlcNAc...) asparagine; by host glycan.

It belongs to the influenza type C/coronaviruses hemagglutinin-esterase family. As to quaternary structure, homodimer; disulfide-linked. Forms a complex with the M protein in the pre-Golgi. Associates then with S-M complex to form a ternary complex S-M-HE. N-glycosylated in the host RER.

It localises to the virion membrane. The protein localises to the host cell membrane. It carries out the reaction N-acetyl-9-O-acetylneuraminate + H2O = N-acetylneuraminate + acetate + H(+). The catalysed reaction is N-acetyl-4-O-acetylneuraminate + H2O = N-acetylneuraminate + acetate + H(+). Functionally, structural protein that makes short spikes at the surface of the virus. Contains receptor binding and receptor-destroying activities. Mediates de-O-acetylation of N-acetyl-4-O-acetylneuraminic acid, which is probably the receptor determinant recognized by the virus on the surface of erythrocytes and susceptible cells. This receptor-destroying activity is important for virus release as it probably helps preventing self-aggregation and ensures the efficient spread of the progeny virus from cell to cell. May serve as a secondary viral attachment protein for initiating infection, the spike protein being the major one. May become a target for both the humoral and the cellular branches of the immune system. This Bos taurus (Bovine) protein is Hemagglutinin-esterase.